The chain runs to 86 residues: Cytochrome c-555 (86 aa).

4 residues coordinate heme c: C14, C17, H18, and M60.

Binds 1 heme c group covalently per subunit.

This basic c-type monoheme cytochrome has been found exclusively in the green photosynthetic bacteria, although its role in bacterial photosynthesis is not established. It has an unusually low redox potential compared with mitochondrial cytochrome c. It is reactive with cytochrome c oxidases but not with reductases. This chain is Cytochrome c-555, found in Chlorobaculum thiosulfatiphilum (Chlorobium limicola f.sp. thiosulfatophilum).